The primary structure comprises 259 residues: MKEHKARKRFGQNFLQDTRIIGDIVNAVRPQADDVVIEIGPGLAAITEPLAKKLNRLHVVEIDRDIVCRLKTLPFADKLVIHEGDVLQFDFNGISGKKKIVGNLPYNISTPLLFKLAEVADDVADMHFMLQKEVVERMVAAPKSNDYGRLGVMLQYFFDMELLIDVPPESFDPAPKIDSAVVRMIPVKHRIGKADDFDHFAKLVKLAFRQRRKTIRNNLKELADDDDLQAVGISPQDRAEHIAPEKYVALSNYLADKAV.

S-adenosyl-L-methionine contacts are provided by Asn13, Leu15, Gly40, Glu61, Asp85, and Asn103.

This sequence belongs to the class I-like SAM-binding methyltransferase superfamily. rRNA adenine N(6)-methyltransferase family. RsmA subfamily.

The protein resides in the cytoplasm. It carries out the reaction adenosine(1518)/adenosine(1519) in 16S rRNA + 4 S-adenosyl-L-methionine = N(6)-dimethyladenosine(1518)/N(6)-dimethyladenosine(1519) in 16S rRNA + 4 S-adenosyl-L-homocysteine + 4 H(+). Functionally, specifically dimethylates two adjacent adenosines (A1518 and A1519) in the loop of a conserved hairpin near the 3'-end of 16S rRNA in the 30S particle. May play a critical role in biogenesis of 30S subunits. This chain is Ribosomal RNA small subunit methyltransferase A, found in Neisseria gonorrhoeae (strain ATCC 700825 / FA 1090).